Consider the following 147-residue polypeptide: Secreted RxLR effector protein BLN04 (147 aa).

The first 23 residues, 1 to 23 (MATMRRICFLFVFNLAVATSTQG), serve as a signal peptide directing secretion. The dEER motif lies at 58–61 (SEER). Residues 117-137 (VYIYTILFLSIPIILGVAMYI) form a helical membrane-spanning segment.

It belongs to the RxLR effector family. Interacts with host transcription factor NAC069.

Its subcellular location is the secreted. The protein resides in the host membrane. Its function is as follows. Secreted effector that inhibits stress-induced relocalization of the transcription factor NAC069 to the nucleus, thus affecting its broad role in abiotic and biotic stress responses. This chain is Secreted RxLR effector protein BLN04, found in Bremia lactucae (Lettuce downy mildew).